Consider the following 289-residue polypeptide: ATP synthase gamma chain (289 aa).

This sequence belongs to the ATPase gamma chain family. As to quaternary structure, F-type ATPases have 2 components, CF(1) - the catalytic core - and CF(0) - the membrane proton channel. CF(1) has five subunits: alpha(3), beta(3), gamma(1), delta(1), epsilon(1). CF(0) has three main subunits: a, b and c.

Its subcellular location is the cell membrane. Its function is as follows. Produces ATP from ADP in the presence of a proton gradient across the membrane. The gamma chain is believed to be important in regulating ATPase activity and the flow of protons through the CF(0) complex. This is ATP synthase gamma chain from Mycoplasmopsis synoviae (strain 53) (Mycoplasma synoviae).